The chain runs to 365 residues: P2Y purinoceptor 4 (365 aa).

The Extracellular segment spans residues 1 to 34 (MASTESSLLRSLGLSPGPGSSEVELDCWFDEDFK). Residues 35–61 (FILLPVSYAVVFVLGLGLNAPTLWLFI) traverse the membrane as a helical segment. The Cytoplasmic segment spans residues 62 to 72 (FRLRPWDATAT). A helical membrane pass occupies residues 73-95 (YMFHLALSDTLYVLSLPTLIYYY). The Extracellular portion of the chain corresponds to 96-112 (AAHNHWPFGTEICKFVR). Cys-108 and Cys-185 are oxidised to a cystine. Residues 113–131 (FLFYWNLYCSVLFLTCISV) form a helical membrane-spanning segment. Over 132–154 (HRYLGICHPLRALRWGRPRLAGL) the chain is Cytoplasmic. Residues 155 to 174 (LCLAVWLVVAGCLVPNLFFV) form a helical membrane-spanning segment. Topologically, residues 175-196 (TTSNKGTTVLCHDTTRPEEFDH) are extracellular. Residues 197–222 (YVHFSSAVMGLLFGVPCLVTLVCYGL) form a helical membrane-spanning segment. Residues 223-246 (MARRLYQPLPGSAQSSSRLRSLRT) lie on the Cytoplasmic side of the membrane. The chain crosses the membrane as a helical span at residues 247–269 (IAVVLTVFAVCFVPFHITRTIYY). At 270 to 287 (LARLLEADCRVLNIVNVV) the chain is on the extracellular side. The chain crosses the membrane as a helical span at residues 288–309 (YKVTRPLASANSCLDPVLYLLT). Topologically, residues 310–365 (GDKYRRQLRQLCGGGKPQPRTAASSLALVSLPEDSSCRWAATPQDSSCSTPRADRL) are cytoplasmic. Residues Ser-333 and Ser-334 each carry the phosphoserine modification.

It belongs to the G-protein coupled receptor 1 family. Phosphorylation of Ser-333 and Ser-334 is a key step in agonist-dependent desensitization and loss of surface P2RY4. This phosphorylation does not involve PKC, nor other calcium activated kinases. In terms of tissue distribution, pancreas.

The protein localises to the cell membrane. Functionally, receptor for UTP and UDP coupled to G-proteins that activate a phosphatidylinositol-calcium second messenger system. Not activated by ATP or ADP. This Homo sapiens (Human) protein is P2Y purinoceptor 4 (P2RY4).